Reading from the N-terminus, the 413-residue chain is Multifunctional CCA protein (413 aa).

The ATP site is built by Gly-8 and Arg-11. CTP-binding residues include Gly-8 and Arg-11. Residues Asp-21 and Asp-23 each contribute to the Mg(2+) site. ATP is bound by residues Arg-91, Arg-137, and Arg-140. Residues Arg-91, Arg-137, and Arg-140 each coordinate CTP. Residues 228-329 (TGVHTLMTLS…VKLFDAIDAW (102 aa)) enclose the HD domain.

This sequence belongs to the tRNA nucleotidyltransferase/poly(A) polymerase family. Bacterial CCA-adding enzyme type 1 subfamily. As to quaternary structure, monomer. Can also form homodimers and oligomers. Mg(2+) is required as a cofactor. Ni(2+) serves as cofactor.

It carries out the reaction a tRNA precursor + 2 CTP + ATP = a tRNA with a 3' CCA end + 3 diphosphate. It catalyses the reaction a tRNA with a 3' CCA end + 2 CTP + ATP = a tRNA with a 3' CCACCA end + 3 diphosphate. Its function is as follows. Catalyzes the addition and repair of the essential 3'-terminal CCA sequence in tRNAs without using a nucleic acid template. Adds these three nucleotides in the order of C, C, and A to the tRNA nucleotide-73, using CTP and ATP as substrates and producing inorganic pyrophosphate. tRNA 3'-terminal CCA addition is required both for tRNA processing and repair. Also involved in tRNA surveillance by mediating tandem CCA addition to generate a CCACCA at the 3' terminus of unstable tRNAs. While stable tRNAs receive only 3'-terminal CCA, unstable tRNAs are marked with CCACCA and rapidly degraded. The protein is Multifunctional CCA protein of Salmonella typhimurium (strain LT2 / SGSC1412 / ATCC 700720).